Consider the following 1221-residue polypeptide: DNA-directed RNA polymerase subunit beta' (1221 aa).

Zn(2+) is bound by residues C60, C62, C75, and C78. D449, D451, and D453 together coordinate Mg(2+). Zn(2+) is bound by residues C821, C896, C903, and C906.

It belongs to the RNA polymerase beta' chain family. As to quaternary structure, the RNAP catalytic core consists of 2 alpha, 1 beta, 1 beta' and 1 omega subunit. When a sigma factor is associated with the core the holoenzyme is formed, which can initiate transcription. Mg(2+) is required as a cofactor. The cofactor is Zn(2+).

It carries out the reaction RNA(n) + a ribonucleoside 5'-triphosphate = RNA(n+1) + diphosphate. Its function is as follows. DNA-dependent RNA polymerase catalyzes the transcription of DNA into RNA using the four ribonucleoside triphosphates as substrates. The chain is DNA-directed RNA polymerase subunit beta' from Lactobacillus delbrueckii subsp. bulgaricus (strain ATCC BAA-365 / Lb-18).